We begin with the raw amino-acid sequence, 187 residues long: F-box protein At5g41720 (187 aa).

The F-box domain maps to 2 to 49 (MMNSPLDYDVLLEIMSYCPATEMAKFRLLSKECNKRSYEMSFINRHLH).

The chain is F-box protein At5g41720 from Arabidopsis thaliana (Mouse-ear cress).